The following is a 363-amino-acid chain: 5-formaminoimidazole-4-carboxamide-1-(beta)-D-ribofuranosyl 5'-monophosphate synthetase (363 aa).

The 5-amino-1-(5-phospho-beta-D-ribosyl)imidazole-4-carboxamide site is built by histidine 29 and serine 96. The 237-residue stretch at arginine 118–glutamate 354 folds into the ATP-grasp domain. Residues proline 148 to cysteine 210 and glutamate 232 contribute to the ATP site. Asparagine 260 lines the 5-amino-1-(5-phospho-beta-D-ribosyl)imidazole-4-carboxamide pocket. Residues glutamine 299 and glutamate 312 each contribute to the Mg(2+) site.

Belongs to the phosphohexose mutase family. Mg(2+) serves as cofactor. Requires Mn(2+) as cofactor.

It carries out the reaction 5-amino-1-(5-phospho-beta-D-ribosyl)imidazole-4-carboxamide + formate + ATP = 5-formamido-1-(5-phospho-D-ribosyl)imidazole-4-carboxamide + ADP + phosphate. It functions in the pathway purine metabolism; IMP biosynthesis via de novo pathway; 5-formamido-1-(5-phospho-D-ribosyl)imidazole-4-carboxamide from 5-amino-1-(5-phospho-D-ribosyl)imidazole-4-carboxamide (formate route): step 1/1. Its function is as follows. Catalyzes the ATP- and formate-dependent formylation of 5-aminoimidazole-4-carboxamide-1-beta-d-ribofuranosyl 5'-monophosphate (AICAR) to 5-formaminoimidazole-4-carboxamide-1-beta-d-ribofuranosyl 5'-monophosphate (FAICAR) in the absence of folates. This chain is 5-formaminoimidazole-4-carboxamide-1-(beta)-D-ribofuranosyl 5'-monophosphate synthetase, found in Methanosphaera stadtmanae (strain ATCC 43021 / DSM 3091 / JCM 11832 / MCB-3).